The following is a 504-amino-acid chain: L-carnitine/gamma-butyrobetaine antiporter (504 aa).

12 helical membrane-spanning segments follow: residues 10 to 30 (IEPK…WLTV), 51 to 71 (WGWA…WLVF), 92 to 112 (IFMM…SIEI), 143 to 163 (GPLP…FFFV), 195 to 215 (FYLV…TPLV), 231 to 251 (LDAI…ACGL), 263 to 283 (SYLS…SFIM), 316 to 336 (WTVF…IFLA), 347 to 367 (LCFG…TVLG), 398 to 418 (WAAL…CFIA), 446 to 466 (LLVR…LLAL), and 475 to 495 (AIIA…LSFI).

The protein belongs to the BCCT transporter (TC 2.A.15) family. CaiT subfamily. In terms of assembly, homotrimer.

Its subcellular location is the cell inner membrane. The enzyme catalyses 4-(trimethylamino)butanoate(in) + (R)-carnitine(out) = 4-(trimethylamino)butanoate(out) + (R)-carnitine(in). It participates in amine and polyamine metabolism; carnitine metabolism. Catalyzes the exchange of L-carnitine for gamma-butyrobetaine. The chain is L-carnitine/gamma-butyrobetaine antiporter from Escherichia coli O157:H7.